The sequence spans 77 residues: Secapin-2 (77 aa).

An N-terminal signal peptide occupies residues 1–32 (MKNYSKNATYLITVLLFSFVTMLLIIPSKCEA). Positions 33-52 (VSNDMQPLEARTADLVQQPR) are excised as a propeptide. Cysteine 61 and cysteine 72 are oxidised to a cystine. The residue at position 77 (proline 77) is a Proline amide.

Belongs to the secapin family. In terms of tissue distribution, expressed by the venom gland.

Its subcellular location is the secreted. In terms of biological role, serine protease inhibitor which exhibits antifibrinolytic, antielastolytic and antimicrobial activities. Displays antimicrobial activity against bacteria and fungi. Likely functions in the innate immune response to microbial infection and possibly in the venom, as an antifibrinolytic agent. Induces hyperalgesia and edema mediated by leukotrienes when injected into mice. Does not induce hemolytic activity, mast cell degranulation, or chemotactic activity for polymorphonucleated leukocytes (PMNL). The polypeptide is Secapin-2 (Apis mellifera (Honeybee)).